The sequence spans 391 residues: Phosphoglycerate kinase (391 aa).

Substrate-binding positions include 21–23 (DLN), R36, 59–62 (HLGR), R113, and R146. Residues K197, E319, and 345–348 (GGDT) each bind ATP.

This sequence belongs to the phosphoglycerate kinase family. In terms of assembly, monomer.

It localises to the cytoplasm. The enzyme catalyses (2R)-3-phosphoglycerate + ATP = (2R)-3-phospho-glyceroyl phosphate + ADP. It functions in the pathway carbohydrate degradation; glycolysis; pyruvate from D-glyceraldehyde 3-phosphate: step 2/5. The protein is Phosphoglycerate kinase of Xanthomonas campestris pv. campestris (strain 8004).